The sequence spans 419 residues: Effector protein BipC (419 aa).

Disordered regions lie at residues 62–91 (VAGSGAQRVELARPKPDAQTRATDRRTVSG) and 338–402 (LQSG…AKSQ). Basic and acidic residues-rich tracts occupy residues 71 to 91 (ELARPKPDAQTRATDRRTVSG) and 380 to 392 (TRDEAAHRSREAA).

The protein belongs to the SctB/SipC family.

The protein resides in the secreted. This chain is Effector protein BipC (bipC), found in Burkholderia mallei (strain NCTC 10247).